Reading from the N-terminus, the 317-residue chain is Flagellar hook-associated protein 3 (317 aa).

The protein belongs to the bacterial flagellin family.

It localises to the secreted. Its subcellular location is the bacterial flagellum. The polypeptide is Flagellar hook-associated protein 3 (flgL) (Salmonella typhimurium (strain LT2 / SGSC1412 / ATCC 700720)).